Reading from the N-terminus, the 1453-residue chain is Collagen alpha-1(I) chain (1453 aa).

The N-terminal stretch at 1 to 22 (MFSFVDLRLLLLLGATALLTHG) is a signal peptide. Positions 23-151 (QEDIPEVSCI…PPGLGGNFAS (129 aa)) are cleaved as a propeptide — N-terminal propeptide. One can recognise a VWFC domain in the interval 29-87 (VSCIHNGLRVPNGETWKPEVCLICICHNGTAVCDDVQCNEELDCPNPQRREGECCAFCP). Asn56 is a glycosylation site (N-linked (GlcNAc...) asparagine). The interval 94–1210 (NSEDVGVEGP…GGRYYRADDA (1117 aa)) is disordered. Pro residues-rich tracts occupy residues 109-118 (PQGPRGPVGP) and 128-143 (PGLP…PGPP). The tract at residues 152 to 167 (QMSYGYDEKSAGVSVP) is nonhelical region (N-terminal). Lys160 bears the Allysine mark. Ser161 carries the phosphoserine modification. Residues 168 to 1181 (GPMGPSGPRG…PGPPGPPGPP (1014 aa)) are triple-helical region. 4-hydroxyproline occurs at positions 179, 182, 185, 194, 197, 200, 215, 230, 236, 245, and 251. Residues 198–207 (GEPGGSGPMG) are compositionally biased toward gly residues. A compositionally biased stretch (basic and acidic residues) spans 218-232 (NGDDGEAGKPGRPGE). Lys254 is subject to 5-hydroxylysine; alternate. Lys254 carries an O-linked (Gal...) hydroxylysine; alternate glycan. Position 260 is a phosphoserine (Ser260). A compositionally biased stretch (low complexity) spans 268–284 (DAGPAGPKGEPGSPGEN). 4-hydroxyproline is present on residues Pro278, Pro281, Pro287, Pro296, and Pro302. The segment covering 307–320 (TAGARGNDGAVGAA) has biased composition (low complexity). Positions 322-334 (PPGPTGPTGPPGF) are enriched in pro residues. 4-hydroxyproline is present on residues Pro323, Pro332, Pro335, Pro362, Pro365, Pro377, Pro383, Pro392, Pro398, Pro401, and Pro416. The span at 368–407 (AGAAGPAGNPGADGQPGAKGANGAPGIAGAPGFPGARGPS) shows a compositional bias: low complexity. A 5-hydroxylysine modification is found at Lys419. 4-hydroxyproline occurs at positions 425, 428, 440, 449, 464, 470, 479, and 485. Positions 474 to 483 (GERGGPGSRG) are enriched in gly residues. Lys494 is modified (5-hydroxylysine). A compositionally biased stretch (low complexity) spans 499 to 515 (ERGAPGPAGPKGSPGEA). 4-hydroxyproline is present on residues Pro503, Pro512, Pro518, Pro524, Pro533, Pro536, Pro545, Pro554, Pro560, Pro572, Pro581, Pro590, Pro593, Pro611, Pro629, Pro635, Pro641, Pro647, Pro653, Pro659, Pro671, Pro680, Pro692, Pro704, Pro707, Pro713, Pro719, and Pro728. The span at 527–566 (KGLTGSPGSPGPDGKTGPPGPAGQDGRPGPAGPPGARGQA) shows a compositional bias: low complexity. Low complexity predominate over residues 623-650 (QGPAGSPGFQGLPGPAGPPGEAGKPGEQ). Low complexity-rich tracts occupy residues 685 to 695 (PRGNNGAPGND) and 703 to 716 (APGA…PGLQ). Positions 734 to 736 (RGD) match the Cell attachment site motif. Lys740 is subject to 5-hydroxylysine. 3 positions are modified to 4-hydroxyproline: Pro746, Pro761, and Pro767. The residue at position 776 (Ser776) is a Phosphoserine. Residues Pro788, Pro797, Pro806, Pro812, Pro830, Pro839, and Pro848 each carry the 4-hydroxyproline modification. The span at 800–815 (AGFAGPPGADGQPGAK) shows a compositional bias: low complexity. A compositionally biased stretch (pro residues) spans 829 to 841 (PPGPAGPAGPPGP). The segment covering 842–872 (IGNVGAPGPKGPRGAAGPPGATGFPGAAGRV) has biased composition (low complexity). Lys851 carries the post-translational modification 5-hydroxylysine. 2 positions are modified to 4-hydroxyproline: Pro860 and Pro866. At Pro874 the chain carries 3-hydroxyproline. 4-hydroxyproline is present on residues Pro875, Pro884, Pro887, Pro908, Pro917, Pro926, Pro935, Pro953, Pro962, Pro965, Pro971, Pro986, Pro992, Pro998, Pro1007, and Pro1013. The segment covering 901–910 (ETGPAGRPGE) has biased composition (low complexity). The span at 920–935 (AGEKGSPGADGPAGSP) shows a compositional bias: low complexity. A compositionally biased stretch (pro residues) spans 985-995 (PPGPMGPPGLA). Over residues 997 to 1012 (PPGESGREGSPGAEGS) the composition is skewed to low complexity. A 5-hydroxylysine modification is found at Lys1022. Residues 1031–1046 (AGPPGAPGAPGAPGPV) are compositionally biased toward pro residues. 4-hydroxyproline is present on residues Pro1034, Pro1037, and Pro1040. The segment covering 1067-1081 (IGPAGARGPAGPQGP) has biased composition (low complexity). Positions 1082–1084 (RGD) match the Cell attachment site motif. Positions 1082 to 1096 (RGDKGETGEQGDRGI) are enriched in basic and acidic residues. A 5-hydroxylysine modification is found at Lys1085. A 5-hydroxylysine; alternate modification is found at Lys1097. O-linked (Gal...) hydroxylysine; alternate glycosylation is present at Lys1097. Low complexity predominate over residues 1102–1148 (FSGLQGPPGSPGSPGEQGPSGASGPAGPRGPPGSAGSPGKDGLNGLP). 5 positions are modified to 4-hydroxyproline: Pro1109, Pro1112, Pro1115, Pro1133, and Pro1148. Position 1153 is a 3-hydroxyproline (Pro1153). Pro1154 carries the post-translational modification 4-hydroxyproline. A compositionally biased stretch (pro residues) spans 1166–1181 (AGPPGPPGPPGPPGPP). Position 1168 is a 3-hydroxyproline (Pro1168). Pro1169 is subject to 4-hydroxyproline. A 3-hydroxyproline modification is found at Pro1171. Pro1172 bears the 4-hydroxyproline mark. Pro1174 is subject to 3-hydroxyproline. Pro1175, Pro1178, and Pro1181 each carry 4-hydroxyproline. The interval 1182 to 1207 (SGGYDFSFLPQPPQEKSQDGGRYYRA) is nonhelical region (C-terminal). Lys1197 carries the allysine modification. Basic and acidic residues predominate over residues 1197 to 1210 (KSQDGGRYYRADDA). A propeptide spans 1208–1453 (DDANVVRDRD…GLDIGPACFV (246 aa)) (C-terminal propeptide). One can recognise a Fibrillar collagen NC1 domain in the interval 1218 to 1453 (LEVDTTLKSL…GLDIGPACFV (236 aa)). 3 cysteine pairs are disulfide-bonded: Cys1248–Cys1280, Cys1288–Cys1451, and Cys1359–Cys1404. Ca(2+)-binding residues include Asp1266, Asn1268, Gln1269, Cys1271, and Asp1274. The N-linked (GlcNAc...) asparagine glycan is linked to Asn1354.

Belongs to the fibrillar collagen family. Trimers of one alpha 2(I) and two alpha 1(I) chains. Interacts with MRC2. Interacts with TRAM2. Interacts with MFAP4 in a Ca (2+)-dependent manner. Post-translationally, contains mostly 4-hydroxyproline. Proline residues at the third position of the tripeptide repeating unit (G-X-Y) are hydroxylated in some or all of the chains. In terms of processing, contains 3-hydroxyproline at a few sites. This modification occurs on the first proline residue in the sequence motif Gly-Pro-Hyp, where Hyp is 4-hydroxyproline. Lysine residues at the third position of the tripeptide repeating unit (G-X-Y) are 5-hydroxylated in some or all of the chains. Post-translationally, O-glycosylated on hydroxylated lysine residues. The O-linked glycan consists of a Glc-Gal disaccharide. As to expression, forms the fibrils of tendon, ligaments and bones. In bones the fibrils are mineralized with calcium hydroxyapatite.

The protein localises to the secreted. The protein resides in the extracellular space. It is found in the extracellular matrix. In terms of biological role, type I collagen is a member of group I collagen (fibrillar forming collagen). The protein is Collagen alpha-1(I) chain of Mus musculus (Mouse).